The following is a 171-amino-acid chain: 6,7-dimethyl-8-ribityllumazine synthase (171 aa).

5-amino-6-(D-ribitylamino)uracil contacts are provided by residues F24, 58–60 (ALE), and 82–84 (AVI). Residue 87–88 (ET) participates in (2S)-2-hydroxy-3-oxobutyl phosphate binding. The Proton donor role is filled by H90. N115 serves as a coordination point for 5-amino-6-(D-ribitylamino)uracil. Residue R129 coordinates (2S)-2-hydroxy-3-oxobutyl phosphate. Residues 150–171 (ALDQLGDDEDEEEDEEDEEERA) form a disordered region. A compositionally biased stretch (acidic residues) spans 154 to 171 (LGDDEDEEEDEEDEEERA).

Belongs to the DMRL synthase family.

It catalyses the reaction (2S)-2-hydroxy-3-oxobutyl phosphate + 5-amino-6-(D-ribitylamino)uracil = 6,7-dimethyl-8-(1-D-ribityl)lumazine + phosphate + 2 H2O + H(+). The protein operates within cofactor biosynthesis; riboflavin biosynthesis; riboflavin from 2-hydroxy-3-oxobutyl phosphate and 5-amino-6-(D-ribitylamino)uracil: step 1/2. In terms of biological role, catalyzes the formation of 6,7-dimethyl-8-ribityllumazine by condensation of 5-amino-6-(D-ribitylamino)uracil with 3,4-dihydroxy-2-butanone 4-phosphate. This is the penultimate step in the biosynthesis of riboflavin. The protein is 6,7-dimethyl-8-ribityllumazine synthase of Burkholderia ambifaria (strain ATCC BAA-244 / DSM 16087 / CCUG 44356 / LMG 19182 / AMMD) (Burkholderia cepacia (strain AMMD)).